Reading from the N-terminus, the 70-residue chain is Small ribosomal subunit protein bS21 (70 aa).

The disordered stretch occupies residues 39-70 (EKPTTERKRKKAAAVSRTRKRLRSQMLPKKLY). The span at 45-61 (RKRKKAAAVSRTRKRLR) shows a compositional bias: basic residues.

It belongs to the bacterial ribosomal protein bS21 family.

The polypeptide is Small ribosomal subunit protein bS21 (Ralstonia nicotianae (strain ATCC BAA-1114 / GMI1000) (Ralstonia solanacearum)).